Here is a 689-residue protein sequence, read N- to C-terminus: Glycine--tRNA ligase beta subunit (689 aa).

Belongs to the class-II aminoacyl-tRNA synthetase family. In terms of assembly, tetramer of two alpha and two beta subunits.

The protein localises to the cytoplasm. It carries out the reaction tRNA(Gly) + glycine + ATP = glycyl-tRNA(Gly) + AMP + diphosphate. The chain is Glycine--tRNA ligase beta subunit from Dictyoglomus turgidum (strain DSM 6724 / Z-1310).